The chain runs to 116 residues: Iron-sulfur cluster insertion protein ErpA (116 aa).

Iron-sulfur cluster is bound by residues Cys44, Cys108, and Cys110.

It belongs to the HesB/IscA family. As to quaternary structure, homodimer. Requires iron-sulfur cluster as cofactor.

Its function is as follows. Required for insertion of 4Fe-4S clusters for at least IspG. The polypeptide is Iron-sulfur cluster insertion protein ErpA (Ectopseudomonas mendocina (strain ymp) (Pseudomonas mendocina)).